A 310-amino-acid polypeptide reads, in one-letter code: tRNA uridine(34) hydroxylase (310 aa).

A Rhodanese domain is found at 124–218 (SDPEVLLIDT…YFEEVPQEES (95 aa)). Cys-178 (cysteine persulfide intermediate) is an active-site residue.

It belongs to the TrhO family.

It carries out the reaction uridine(34) in tRNA + AH2 + O2 = 5-hydroxyuridine(34) in tRNA + A + H2O. Its function is as follows. Catalyzes oxygen-dependent 5-hydroxyuridine (ho5U) modification at position 34 in tRNAs. The chain is tRNA uridine(34) hydroxylase from Pseudomonas putida (strain ATCC 700007 / DSM 6899 / JCM 31910 / BCRC 17059 / LMG 24140 / F1).